The sequence spans 158 residues: Cyclic pyranopterin monophosphate synthase (158 aa).

Substrate-binding positions include 74 to 76 (MCH) and 112 to 113 (ME). The active site involves Asp-127.

Belongs to the MoaC family. As to quaternary structure, homohexamer; trimer of dimers.

It catalyses the reaction (8S)-3',8-cyclo-7,8-dihydroguanosine 5'-triphosphate = cyclic pyranopterin phosphate + diphosphate. The protein operates within cofactor biosynthesis; molybdopterin biosynthesis. In terms of biological role, catalyzes the conversion of (8S)-3',8-cyclo-7,8-dihydroguanosine 5'-triphosphate to cyclic pyranopterin monophosphate (cPMP). In Helicobacter pylori (strain Shi470), this protein is Cyclic pyranopterin monophosphate synthase.